We begin with the raw amino-acid sequence, 356 residues long: MGSKDNAISNDSALVLSLLLLLLLPLLHEAAEGCDMFTGRWVKDDSYPLYNSSTCPFIRHEFSCQRNGRPDLDYSTFRWQPLSCKLARFNGLQFLKKNKGKKIMFVGDSLSLNQWQSLACMLHSSVPNSTYTLTTQGSISTYTFKEYGLELKLDRNVYLVDIVREKIGRVLKLDSINDGKNWVEMDTLIFNTWHWWSRRGPAQPWDLIQIGTNVTKDMDRVAAFEIALGTWGKWVDTVLNTKKTRVFFQGISPSHYKGVLWGEPAAKSCVGQKEPLLGTKYPGGLPAEVGVLKRALGKISKPVTLLDITMLSLLRKDAHPSVYGLGGRNSSGDCSHWCLSGVPDTWNEILYNYMVE.

Residues S12–A31 traverse the membrane as a helical; Signal-anchor for type II membrane protein segment. Residues G107 to S109 carry the GDS motif motif. The DCXHWCLPGXXDXWN motif motif lies at D333 to N347.

Belongs to the PC-esterase family. TBL subfamily.

Its subcellular location is the membrane. Functionally, may act as a bridging protein that binds pectin and other cell wall polysaccharides. Probably involved in maintaining esterification of pectins. May be involved in the specific O-acetylation of cell wall polymers. The polypeptide is Protein trichome birefringence-like 41 (TBL41) (Arabidopsis thaliana (Mouse-ear cress)).